An 826-amino-acid chain; its full sequence is MWALCSLLRSATGRTMSQGRTISQGSARRQRPPKDPLRHLRTREKRGPSGSSGGANTVYLQVVAVGSRDAGAALYVFSEFNRYLFNCGEGVQRLMQEHKLKVARLDNIFLTRMHWSNVGGLSGMILTLKETGLPKCVLSGPPQLEKYLEAIKIFSGPLKGIELAVRPHSAPEYKDETMTVYQIPIHSEQRSGKHQPWQSPERPLGRLSPERSSDSESNESEPHLPRGVSQRRGVRDPSLVVAFICKLHLKRGSFLVLKAKELGLPVGTAAIAPIIAAVKDGKSITHEGREILAEELCTPPDPGAAFVVVECPDEGFIQPICENATFQRYQGKADAPVALVVHMAPESVLADSRYQQWMERFGPDTQHLVLNENCASVHNLRSYKIQTQLNLIHPDIFPLLTSFPRKKEGPTLSVPVVQGECLLKYQLRPRREWQRDAIITCNPEEFIDEALQLPNFQESMQEYRRSAQDGPAPAEKRSQYPEIVFLGTGSAVPMKTRNVSATLVNISPDTSLLLDCGEGTFGQLYRHYGDQVDRVLGSLAAVFVSHLHADHHTGLLNILLQRERALASLGKPFHPLLVVAPTQLKAWLQQYHNQCQEVLHHVSMIPAKYLQVGAEISSPAVERLISSLLRTCDLEEFQTCLVRHCRHAFGCALVHTSGWKVVYSGDTMPCEALVQMGKDATLLIHEATLEDGLEEEAVEKTHSTTSQAIRVGMRMNAEFIMLNHFSQRYAKVPLFSPDFNEKVGIAFDHMKVSFGDFPTVPKLIPPLKALFAGDIEEMEERREKRELRQVRAALLSRALTDDLEDGEPQQKRAHTEEPQSKKVRAQ.

The transit peptide at 1–16 directs the protein to the mitochondrion; it reads MWALCSLLRSATGRTM. A compositionally biased stretch (polar residues) spans 15–27; it reads TMSQGRTISQGSA. Disordered stretches follow at residues 15-53 and 187-231; these read TMSQ…GSSG and SEQR…VSQR. Phosphoserine occurs at positions 199, 208, 212, 229, 618, and 736. Basic and acidic residues predominate over residues 208–224; that stretch reads SPERSSDSESNESEPHL. Residues 798-826 form a disordered region; sequence ALTDDLEDGEPQQKRAHTEEPQSKKVRAQ. Residues 808 to 820 are compositionally biased toward basic and acidic residues; the sequence is PQQKRAHTEEPQS.

The protein belongs to the RNase Z family. As to quaternary structure, homodimer. Interacts with PTCD1. The cofactor is Zn(2+).

Its subcellular location is the mitochondrion. It is found in the mitochondrion matrix. The protein localises to the mitochondrion nucleoid. The protein resides in the nucleus. The catalysed reaction is Endonucleolytic cleavage of RNA, removing extra 3' nucleotides from tRNA precursor, generating 3' termini of tRNAs. A 3'-hydroxy group is left at the tRNA terminus and a 5'-phosphoryl group is left at the trailer molecule.. Functionally, zinc phosphodiesterase, which displays mitochondrial tRNA 3'-processing endonuclease activity. Involved in tRNA maturation, by removing a 3'-trailer from precursor tRNA. Associates with mitochondrial DNA complexes at the nucleoids to initiate RNA processing and ribosome assembly. The protein is Zinc phosphodiesterase ELAC protein 2 (ELAC2) of Macaca fascicularis (Crab-eating macaque).